Consider the following 103-residue polypeptide: NADH dehydrogenase [ubiquinone] 1 beta subcomplex subunit 7 (103 aa).

The CHCH domain occupies 27–69 (RDMCAHLLIPLNKCRQAEFYLPWKCEDERHVYEKCEYELVMER). 2 consecutive short sequence motifs (cx9C motif) follow at residues 30–40 (CAHLLIPLNKC) and 51–61 (CEDERHVYEKC). Intrachain disulfides connect Cys-30-Cys-61 and Cys-40-Cys-51.

This sequence belongs to the complex I NDUFB7 subunit family. As to quaternary structure, complex I is composed of at least 49 different subunits.

Its subcellular location is the mitochondrion. It localises to the mitochondrion inner membrane. The protein localises to the mitochondrion intermembrane space. Its function is as follows. Accessory subunit of the mitochondrial membrane respiratory chain NADH dehydrogenase (Complex I), that is believed not to be involved in catalysis. Complex I functions in the transfer of electrons from NADH to the respiratory chain. The immediate electron acceptor for the enzyme is believed to be ubiquinone. This chain is NADH dehydrogenase [ubiquinone] 1 beta subcomplex subunit 7, found in Arabidopsis thaliana (Mouse-ear cress).